The primary structure comprises 77 residues: Small ribosomal subunit protein bS18 (77 aa).

Belongs to the bacterial ribosomal protein bS18 family. Part of the 30S ribosomal subunit. Forms a tight heterodimer with protein bS6.

Functionally, binds as a heterodimer with protein bS6 to the central domain of the 16S rRNA, where it helps stabilize the platform of the 30S subunit. The chain is Small ribosomal subunit protein bS18 from Desulforamulus reducens (strain ATCC BAA-1160 / DSM 100696 / MI-1) (Desulfotomaculum reducens).